A 429-amino-acid chain; its full sequence is MGLIAFLILIGVLVWVHEFGHFLMAKLFRVKVEIFSIGFGPPIFRRQWGETVYQIAALPLGGYVKLYGEEENVHDPRAFSTKKPWQKILIALGGPLFNFLFTILVFALVYTAGVEVPKYLKEPVVVGYVQRDSIAQKIGIKPGDKIIKINGYEVRTWEDLRDALIRLSLDGVKETTLFLERNGEVLHLTIKVPNVQKGEELGIAPLVKPVVGGVKKGSPADQVGIKPGDLILEVNGKKINTWYELVEEVRKSQGKAIKLKILRNGKMIEKELIPAKDPKTGTYFIGLFPKTETVVEKKPFGEALASAVNRTWELTVLTLKTIAGLITGKVSFQTLGGPIAIAQIAGQAAQSGFIPYLVMMAFISLQLGIFNLIPLPILDGGLILLFAIEWLRGRPLPEKFKEYWQRVGLAIIITLTIFVFINDILRLLR.

Position 17 (His-17) interacts with Zn(2+). The active site involves Glu-18. His-21 contributes to the Zn(2+) binding site. The helical transmembrane segment at 88-110 (ILIALGGPLFNFLFTILVFALVY) threads the bilayer. In terms of domain architecture, PDZ spans 189 to 265 (TIKVPNVQKG…AIKLKILRNG (77 aa)). Transmembrane regions (helical) follow at residues 369-391 (IFNLIPLPILDGGLILLFAIEWL) and 406-428 (RVGLAIIITLTIFVFINDILRLL).

Belongs to the peptidase M50B family. Zn(2+) serves as cofactor.

The protein localises to the cell inner membrane. The sequence is that of Putative zinc metalloprotease aq_1964 from Aquifex aeolicus (strain VF5).